We begin with the raw amino-acid sequence, 170 residues long: Lipoprotein signal peptidase (170 aa).

3 consecutive transmembrane segments (helical) span residues 5-25 (IVGVIAIVLVFALDQVSKAYA), 62-82 (SNLIFTYVSLGVILMLFVLFV), and 89-111 (STICMGVVIGGALGNLADRLRFG). Active-site residues include D115 and D133. The chain crosses the membrane as a helical span at residues 126 to 146 (WPAFNFADVCVTCGVICFLCL).

The protein belongs to the peptidase A8 family.

The protein localises to the cell inner membrane. It catalyses the reaction Release of signal peptides from bacterial membrane prolipoproteins. Hydrolyzes -Xaa-Yaa-Zaa-|-(S,diacylglyceryl)Cys-, in which Xaa is hydrophobic (preferably Leu), and Yaa (Ala or Ser) and Zaa (Gly or Ala) have small, neutral side chains.. It participates in protein modification; lipoprotein biosynthesis (signal peptide cleavage). This protein specifically catalyzes the removal of signal peptides from prolipoproteins. This is Lipoprotein signal peptidase from Anaplasma marginale (strain Florida).